The following is a 338-amino-acid chain: Nickel transporter NixA (338 aa).

The next 8 membrane-spanning stretches (helical) occupy residues 11-31, 37-57, 79-99, 127-147, 187-207, 217-237, 266-286, and 307-327; these read WLPY…FLWI, HILF…AFDA, GVGF…AVFL, FFLV…INLF, VLPL…IALL, AISF…MSLL, ITAI…LQIL, and YLGY…SLIW.

This sequence belongs to the NiCoT transporter (TC 2.A.52) family.

It localises to the cell membrane. Functionally, secondary nickel transporter. Required for full urease activity. The protein is Nickel transporter NixA of Staphylococcus aureus (strain NCTC 8325 / PS 47).